An 860-amino-acid polypeptide reads, in one-letter code: DNA mismatch repair protein MutS (860 aa).

Residue 606–613 (GPNMSGKS) coordinates ATP.

Belongs to the DNA mismatch repair MutS family.

Functionally, this protein is involved in the repair of mismatches in DNA. It is possible that it carries out the mismatch recognition step. This protein has a weak ATPase activity. The sequence is that of DNA mismatch repair protein MutS from Geobacillus sp. (strain WCH70).